A 211-amino-acid chain; its full sequence is WAP four-disulfide core domain protein 1 (211 aa).

The N-terminal stretch at 1 to 23 (MGNCGRKVLRALSFLLLLGSSSA) is a signal peptide. In terms of domain architecture, WAP spans 50-99 (RQPHADRCPPPPRTLPPGACQATRCQADSECPRHRRCCYNGCAYACLEAV). Cystine bridges form between C57–C87, C69–C91, C74–C86, and C80–C95. Over residues 182–198 (VLRQRLHKEYPEGDSKN) the composition is skewed to basic and acidic residues. The tract at residues 182–211 (VLRQRLHKEYPEGDSKNVAEPGKGQQRHFP) is disordered.

The protein localises to the secreted. Its function is as follows. Has growth inhibitory activity. The polypeptide is WAP four-disulfide core domain protein 1 (Wfdc1) (Mus musculus (Mouse)).